The chain runs to 1268 residues: Neurocan core protein (1268 aa).

The signal sequence occupies residues 1–22 (MGAGSVWASGLLLLWLLLLVAG). One can recognise an Ig-like V-type domain in the interval 37–157 (RMLKSGSGPV…EQDLVTLEVT (121 aa)). Cystine bridges form between Cys58–Cys139, Cys181–Cys252, Cys205–Cys226, Cys279–Cys354, and Cys303–Cys324. Residue Asn121 is glycosylated (N-linked (GlcNAc...) asparagine). 2 Link domains span residues 159–254 (VVFH…YCFA) and 258–356 (GGEV…YCFR). Asn339 carries an N-linked (GlcNAc...) asparagine glycan. 4 disordered regions span residues 363–391 (QHGD…ELKP), 406–442 (PLMS…SWPS), 472–540 (PLGT…DQSH), and 574–630 (ISPS…LQAS). Residues Ser380 and Ser410 are each glycosylated (O-linked (Xyl...) (chondroitin sulfate) serine). A compositionally biased stretch (polar residues) spans 419 to 430 (TWTQAPEETLGS). Residues 575–585 (SPSVPSTESTP) are compositionally biased toward low complexity. Over residues 608-617 (PSEPPAPSPG) the composition is skewed to pro residues. Residues 618–630 (PSEALSAVSLQAS) show a composition bias toward low complexity. The N-linked (GlcNAc...) asparagine glycan is linked to Asn742. One can recognise an EGF-like 1 domain in the interval 960-996 (PTDPCENNPCLHGGTCHTNGTVYGCSCDQGYAGENCE). 11 cysteine pairs are disulfide-bonded: Cys964-Cys975, Cys969-Cys984, Cys986-Cys995, Cys1002-Cys1013, Cys1007-Cys1022, Cys1024-Cys1033, Cys1040-Cys1051, Cys1068-Cys1160, Cys1136-Cys1152, Cys1167-Cys1210, and Cys1196-Cys1223. Residue Asn978 is glycosylated (N-linked (GlcNAc...) asparagine). Residues 998–1034 (DIDDCLCSPCENGGTCIDEVNGFICLCLPSYGGSLCE) form the EGF-like 2; calcium-binding domain. The region spanning 1036–1165 (DTEGCDRGWH…LPYVCKKGTV (130 aa)) is the C-type lectin domain. In terms of domain architecture, Sushi spans 1165–1225 (VLCGPPPAVE…WDRPQIMCIK (61 aa)). Asn1175 carries N-linked (GlcNAc...) asparagine glycosylation. Over residues 1228-1255 (RSHRMRRHHHHPHRHHKPRKEHRKHKRH) the composition is skewed to basic residues. Positions 1228–1268 (RSHRMRRHHHHPHRHHKPRKEHRKHKRHPAEDWEKDEGDFC) are disordered.

This sequence belongs to the aggrecan/versican proteoglycan family. Post-translationally, O-glycosylated; contains chondroitin sulfate. In terms of tissue distribution, brain.

The protein resides in the secreted. Functionally, may modulate neuronal adhesion and neurite growth during development by binding to neural cell adhesion molecules (NG-CAM and N-CAM). Chondroitin sulfate proteoglycan; binds to hyaluronic acid. The chain is Neurocan core protein (Ncan) from Mus musculus (Mouse).